Reading from the N-terminus, the 424-residue chain is Neurotensin receptor type 1 (424 aa).

At 1-67 (MHLNSSVQQG…TDIYSKVLVT (67 aa)) the chain is on the extracellular side. N-linked (GlcNAc...) asparagine glycans are attached at residues Asn-4, Asn-38, and Asn-42. The helical transmembrane segment at 68–88 (AVYLALFVVGTVGNSVTAFTL) threads the bilayer. Residues 89–102 (ARKKSLQSLQSTVH) lie on the Cytoplasmic side of the membrane. Residues 103–122 (YHLGSLALSDLLILLLAMPV) traverse the membrane as a helical segment. The Extracellular segment spans residues 123-142 (ELYNFIWVHHPWAFGDAGCR). A disulfide bridge connects residues Cys-141 and Cys-224. A helical transmembrane segment spans residues 143–164 (GYYFLRDACTYATALNVASLSV). The Cytoplasmic portion of the chain corresponds to 165-184 (ERYLAICHPFKAKTLMSRSR). The chain crosses the membrane as a helical span at residues 185–205 (TKKFISAIWLASALLAVPMLF). Over 206–234 (TMGLQNRSADGQHPGGLVCTPTVDTATVK) the chain is Extracellular. An N-linked (GlcNAc...) asparagine glycan is attached at Asn-211. A helical membrane pass occupies residues 235-259 (VVIQVNTFMSFLFPMLIISILNTVI). The Cytoplasmic portion of the chain corresponds to 260–308 (ANKLTVMVHQAAEQGRGVCTVGTHNSLEHSTFNMSIEPGRVQALRHGVL). The chain crosses the membrane as a helical span at residues 309–330 (VLRAVVIAFVVCWLPYHVRRLM). Residues 326–349 (VRRLMFCYISDEQWTTFLFDFYHY) are neurotensin binding. Over 331–348 (FCYISDEQWTTFLFDFYH) the chain is Extracellular. The helical transmembrane segment at 349–369 (YFYMLTNALFYVSSAINPILY) threads the bilayer. The Cytoplasmic segment spans residues 370-424 (NLVSANFRQVFLSTLACLCPGWRRRRKKRPTFSRKPNSMSSNHAFSTSATRETLY). Residues Cys-386 and Cys-388 are each lipidated (S-palmitoyl cysteine). Residues 398 to 424 (RPTFSRKPNSMSSNHAFSTSATRETLY) form a disordered region. A compositionally biased stretch (polar residues) spans 403 to 424 (RKPNSMSSNHAFSTSATRETLY).

This sequence belongs to the G-protein coupled receptor 1 family. Neurotensin receptor subfamily. NTSR1 sub-subfamily. Interacts (palmitoylated form) with GNA11. Post-translationally, N-glycosylated. Palmitoylated; this is required for normal localization at membrane rafts and normal GNA11-mediated activation of down-stream signaling cascades. The palmitoylation level increases in response to neurotensin treatment.

The protein localises to the cell membrane. It localises to the membrane raft. In terms of biological role, G-protein coupled receptor for the tridecapeptide neurotensin (NTS). Signaling is effected via G proteins that activate a phosphatidylinositol-calcium second messenger system. Signaling leads to the activation of downstream MAP kinases and protects cells against apoptosis. The protein is Neurotensin receptor type 1 (Ntsr1) of Mus musculus (Mouse).